Consider the following 62-residue polypeptide: Ferredoxin-1 (62 aa).

2 4Fe-4S ferredoxin-type domains span residues 3-32 and 33-62; these read WTVT…LQDG and KAVP…VEEN. 2 residues coordinate [3Fe-4S] cluster: C12 and C18. Positions 22, 42, 45, and 48 each coordinate [4Fe-4S] cluster. C52 lines the [3Fe-4S] cluster pocket.

In terms of assembly, homodimer. It depends on [3Fe-4S] cluster as a cofactor. Requires [4Fe-4S] cluster as cofactor.

Its function is as follows. Ferredoxins are iron-sulfur proteins that transfer electrons in a wide variety of metabolic reactions. This ferredoxin serves as a carrier for pyruvate dehydrogenase. The polypeptide is Ferredoxin-1 (Nitratidesulfovibrio vulgaris (strain DSM 19637 / Miyazaki F) (Desulfovibrio vulgaris)).